The primary structure comprises 974 residues: Probable proton ATPase 1B (974 aa).

Positions 1–23 are enriched in basic and acidic residues; that stretch reads MSSKKYELDAAAFEDKPESHSDA. The interval 1-61 is disordered; it reads MSSKKYELDA…ATDLLPPSKG (61 aa). Helical transmembrane passes span 93 to 112, 118 to 137, 265 to 286, and 295 to 321; these read GLWGPMPAALWIAIIIEFAL, GAILFAIQIANATIGWYETI, VMLALCAISFILCMCCFIYLLA, and ALQFAVVVLVVSIPIALEIVVTTTLAV. The 4-aspartylphosphate intermediate role is filled by aspartate 351. Transmembrane regions (helical) follow at residues 631-651, 662-684, 698-712, 738-761, 813-840, and 869-887; these read AAADMVLTEPGLSVVVEAMLV, FLTYRISATLQLVCFFFIACFSL, FFHLPVLMFMLITLL, VVFVSASILAAVACGSSLMLLWIG, FFFYVPPSPILFCGAIISLLVSTMAASF, and VWIYCIVWWFVQDVVKVLA. The segment at 952-974 is disordered; sequence REDTHVLNESTSPVNAFSPKVKK.

This sequence belongs to the cation transport ATPase (P-type) (TC 3.A.3) family. Type IIIA subfamily.

Its subcellular location is the membrane. It carries out the reaction ATP + H2O + H(+)(in) = ADP + phosphate + 2 H(+)(out). This chain is Probable proton ATPase 1B (H1B), found in Leishmania donovani.